Reading from the N-terminus, the 215-residue chain is AN1-type zinc finger protein C1271.05c (215 aa).

The span at 116 to 128 shows a compositional bias: polar residues; the sequence is IPSISKSNLTNPP. The disordered stretch occupies residues 116–138; the sequence is IPSISKSNLTNPPLESEKSSDKA. Residues 144–193 form an AN1-type zinc finger; sequence ATSRRRCCHPTCTRITLRLAGNCLHCNGRFCAAHRLMEDHDCVALFSLRK. Positions 150, 155, 166, 169, 174, 177, 183, and 185 each coordinate Zn(2+).

Its subcellular location is the cytoplasm. The protein resides in the nucleus. In Schizosaccharomyces pombe (strain 972 / ATCC 24843) (Fission yeast), this protein is AN1-type zinc finger protein C1271.05c.